Consider the following 477-residue polypeptide: Glycogen synthase (477 aa).

Lys15 contributes to the ADP-alpha-D-glucose binding site.

This sequence belongs to the glycosyltransferase 1 family. Bacterial/plant glycogen synthase subfamily.

The catalysed reaction is [(1-&gt;4)-alpha-D-glucosyl](n) + ADP-alpha-D-glucose = [(1-&gt;4)-alpha-D-glucosyl](n+1) + ADP + H(+). It participates in glycan biosynthesis; glycogen biosynthesis. In terms of biological role, synthesizes alpha-1,4-glucan chains using ADP-glucose. This is Glycogen synthase from Shigella flexneri serotype 5b (strain 8401).